The primary structure comprises 235 residues: Leucyl/phenylalanyl-tRNA--protein transferase (235 aa).

Belongs to the L/F-transferase family.

It is found in the cytoplasm. The catalysed reaction is N-terminal L-lysyl-[protein] + L-leucyl-tRNA(Leu) = N-terminal L-leucyl-L-lysyl-[protein] + tRNA(Leu) + H(+). It carries out the reaction N-terminal L-arginyl-[protein] + L-leucyl-tRNA(Leu) = N-terminal L-leucyl-L-arginyl-[protein] + tRNA(Leu) + H(+). It catalyses the reaction L-phenylalanyl-tRNA(Phe) + an N-terminal L-alpha-aminoacyl-[protein] = an N-terminal L-phenylalanyl-L-alpha-aminoacyl-[protein] + tRNA(Phe). Functions in the N-end rule pathway of protein degradation where it conjugates Leu, Phe and, less efficiently, Met from aminoacyl-tRNAs to the N-termini of proteins containing an N-terminal arginine or lysine. In Cellvibrio japonicus (strain Ueda107) (Pseudomonas fluorescens subsp. cellulosa), this protein is Leucyl/phenylalanyl-tRNA--protein transferase.